The sequence spans 150 residues: Deoxyuridine 5'-triphosphate nucleotidohydrolase (150 aa).

Substrate contacts are provided by residues 69–71 (RSG), N82, and 86–88 (TID).

This sequence belongs to the dUTPase family. Mg(2+) is required as a cofactor.

It catalyses the reaction dUTP + H2O = dUMP + diphosphate + H(+). The protein operates within pyrimidine metabolism; dUMP biosynthesis; dUMP from dCTP (dUTP route): step 2/2. Functionally, this enzyme is involved in nucleotide metabolism: it produces dUMP, the immediate precursor of thymidine nucleotides and it decreases the intracellular concentration of dUTP so that uracil cannot be incorporated into DNA. The polypeptide is Deoxyuridine 5'-triphosphate nucleotidohydrolase (Syntrophus aciditrophicus (strain SB)).